The sequence spans 217 residues: Ras-related protein RABA5b (217 aa).

19-26 (GDSAVGKS) is a binding site for GTP. The short motif at 41 to 49 (SKATIGVEF) is the Effector region element. Residues 67 to 71 (DTAGQ), 125 to 128 (NKCD), and 155 to 156 (SA) each bind GTP. 2 S-geranylgeranyl cysteine lipidation sites follow: Cys-214 and Cys-215.

This sequence belongs to the small GTPase superfamily. Rab family.

The protein localises to the cell membrane. Intracellular vesicle trafficking and protein transport. This chain is Ras-related protein RABA5b (RABA5B), found in Arabidopsis thaliana (Mouse-ear cress).